Reading from the N-terminus, the 407-residue chain is Zinc finger protein 260 (407 aa).

3 disordered regions span residues 1–21 (MLESLQPESHLLHDEPDPGES), 39–72 (VEHKKTHSGEKSPECTGCGEESSQASSLTLHLRS), and 96–124 (SHQKQHTEERPSESKKTPVPMTTTVRNQR). The C2H2-type 1 zinc finger occupies 23–45 (YECNECKETFSLEQNFVEHKKTH). Basic and acidic residues-rich tracts occupy residues 39-51 (VEHKKTHSGEKSP) and 100-111 (QHTEERPSESKK). The C2H2-type 2; degenerate zinc-finger motif lies at 51–73 (PECTGCGEESSQASSLTLHLRSR). The C2H2-type 3 zinc-finger motif lies at 79–101 (YKCGECGKAFSQRGNFLSHQKQH). Polar residues predominate over residues 115–124 (PMTTTVRNQR). 10 C2H2-type zinc fingers span residues 131-153 (YACKECGKAFNGKSYLKEHEKIH), 159-181 (FECSQCGRAFSQKQYLIKHQNIH), 187-209 (FKCNECGKAFSQKENLIIHQRIH), 215-237 (YECKGCGKAFIQKSSLIRHQRSH), 243-265 (YTCKECGKAFSGKSNLTEHEKIH), 271-293 (YKCNECGTIFRQKQYLIKHHNIH), 299-321 (YECNKCGKAFSRITSLIVHVRIH), 327-349 (YECKICGKAFCQSSSLTVHMRSH), 355-377 (YGCNECGKAFSQFSTLALHMRIH), and 383-405 (YQCSECGKAFSQKSHHIRHQRIH).

Belongs to the krueppel C2H2-type zinc-finger protein family. In terms of assembly, binds DNA. Interacts with GATA4. In terms of tissue distribution, predominantly present in heart. Outside the heart, it is detected in embryonic and postnatal vascular smooth muscle cells and in epithelial cells of the lung, gut and kidney at sites of epithelial morphogenesis and in the spinal cord (at protein level).

It localises to the nucleus. In terms of biological role, transcription factor that acts as a cardiac regulator and an effector of alpha1-adrenergic signaling. Binds to PE response elements (PERE) present in the promoter of genes such as ANF/NPPA and acts as a direct transcriptional activator of NPPA. Also acts as a cofactor with GATA4, a key cardiac regulator. This chain is Zinc finger protein 260 (Znf260), found in Mus musculus (Mouse).